Consider the following 279-residue polypeptide: 2-dehydro-3-deoxyphosphooctonate aldolase (279 aa).

It belongs to the KdsA family.

The protein localises to the cytoplasm. It carries out the reaction D-arabinose 5-phosphate + phosphoenolpyruvate + H2O = 3-deoxy-alpha-D-manno-2-octulosonate-8-phosphate + phosphate. It participates in carbohydrate biosynthesis; 3-deoxy-D-manno-octulosonate biosynthesis; 3-deoxy-D-manno-octulosonate from D-ribulose 5-phosphate: step 2/3. Its pathway is bacterial outer membrane biogenesis; lipopolysaccharide biosynthesis. This chain is 2-dehydro-3-deoxyphosphooctonate aldolase, found in Aromatoleum aromaticum (strain DSM 19018 / LMG 30748 / EbN1) (Azoarcus sp. (strain EbN1)).